The sequence spans 294 residues: Syntaxin-19 (294 aa).

The region spanning 209 to 271 (LSEIEQRHKE…NNTKEKFGLA (63 aa)) is the t-SNARE coiled-coil homology domain.

It belongs to the syntaxin family. Interacts with EGFR.

Its subcellular location is the cell membrane. The protein localises to the cytoplasm. Plays a role in endosomal trafficking of the epidermal growth factor receptor (EGFR). This chain is Syntaxin-19 (STX19), found in Homo sapiens (Human).